The sequence spans 329 residues: 4-hydroxythreonine-4-phosphate dehydrogenase (329 aa).

His-136 and Thr-137 together coordinate substrate. A divalent metal cation-binding residues include His-166, His-211, and His-266. Residues Lys-274, Asn-283, and Arg-292 each coordinate substrate.

This sequence belongs to the PdxA family. In terms of assembly, homodimer. It depends on Zn(2+) as a cofactor. Requires Mg(2+) as cofactor. Co(2+) serves as cofactor.

The protein localises to the cytoplasm. It carries out the reaction 4-(phosphooxy)-L-threonine + NAD(+) = 3-amino-2-oxopropyl phosphate + CO2 + NADH. Its pathway is cofactor biosynthesis; pyridoxine 5'-phosphate biosynthesis; pyridoxine 5'-phosphate from D-erythrose 4-phosphate: step 4/5. Functionally, catalyzes the NAD(P)-dependent oxidation of 4-(phosphooxy)-L-threonine (HTP) into 2-amino-3-oxo-4-(phosphooxy)butyric acid which spontaneously decarboxylates to form 3-amino-2-oxopropyl phosphate (AHAP). This chain is 4-hydroxythreonine-4-phosphate dehydrogenase, found in Escherichia fergusonii (strain ATCC 35469 / DSM 13698 / CCUG 18766 / IAM 14443 / JCM 21226 / LMG 7866 / NBRC 102419 / NCTC 12128 / CDC 0568-73).